The chain runs to 178 residues: Bifunctional protein PyrR (178 aa).

Residues 41–42, 103–111, and R136 contribute to the substrate site; these read RR and DDVLYTGRT. The PRPP-binding motif lies at 99 to 111; the sequence is VILVDDVLYTGRT.

The protein belongs to the purine/pyrimidine phosphoribosyltransferase family. PyrR subfamily. As to quaternary structure, homodimer and homohexamer; in equilibrium.

The enzyme catalyses UMP + diphosphate = 5-phospho-alpha-D-ribose 1-diphosphate + uracil. In terms of biological role, regulates transcriptional attenuation of the pyrimidine nucleotide (pyr) operon by binding in a uridine-dependent manner to specific sites on pyr mRNA. This disrupts an antiterminator hairpin in the RNA and favors formation of a downstream transcription terminator, leading to a reduced expression of downstream genes. Also displays a weak uracil phosphoribosyltransferase activity which is not physiologically significant. This Clostridium acetobutylicum (strain ATCC 824 / DSM 792 / JCM 1419 / IAM 19013 / LMG 5710 / NBRC 13948 / NRRL B-527 / VKM B-1787 / 2291 / W) protein is Bifunctional protein PyrR.